A 169-amino-acid polypeptide reads, in one-letter code: Transcription antitermination protein NusB (169 aa).

The tract at residues 150–169 (AAATSRRTETAGGESNDAGS) is disordered.

The protein belongs to the NusB family.

Involved in transcription antitermination. Required for transcription of ribosomal RNA (rRNA) genes. Binds specifically to the boxA antiterminator sequence of the ribosomal RNA (rrn) operons. This chain is Transcription antitermination protein NusB, found in Rhodococcus jostii (strain RHA1).